We begin with the raw amino-acid sequence, 146 residues long: Large-conductance mechanosensitive channel (146 aa).

Transmembrane regions (helical) follow at residues 21 to 41 (VGII…ADLI), 44 to 64 (IIGL…LGDG), and 83 to 103 (GSFI…FLLV).

Belongs to the MscL family. As to quaternary structure, homopentamer.

It localises to the cell inner membrane. Functionally, channel that opens in response to stretch forces in the membrane lipid bilayer. May participate in the regulation of osmotic pressure changes within the cell. This Cereibacter sphaeroides (strain ATCC 17023 / DSM 158 / JCM 6121 / CCUG 31486 / LMG 2827 / NBRC 12203 / NCIMB 8253 / ATH 2.4.1.) (Rhodobacter sphaeroides) protein is Large-conductance mechanosensitive channel.